The chain runs to 248 residues: Cutinase (248 aa).

The first 17 residues, 1–17 (MRSLAILTTLLAGHAFA), serve as a signal peptide directing secretion. Positions 18–28 (YPKPAPQSVNR) are excised as a propeptide. The tract at residues 31-70 (WPSINEFLSELAKVMPIGDTITAACDLISDGEDAAASLFG) is lid covering the active site of the uncomplexed enzyme. 2 disulfide bridges follow: cysteine 55–cysteine 91 and cysteine 79–cysteine 153. Serine 164 functions as the Nucleophile in the catalytic mechanism. A disulfide bridge links cysteine 212 with cysteine 219. The active site involves aspartate 216. The active-site Proton donor/acceptor is the histidine 229.

The protein belongs to the cutinase family.

It localises to the secreted. It catalyses the reaction cutin + H2O = cutin monomers.. With respect to regulation, weakly inhibited by n-undecyl phosphonate (C11Y4). Activity unaffected by paraoxon. Functionally, catalyzes the hydrolysis of complex carboxylic polyesters found in the cell wall of plants. Degrades cutin, a macromolecule that forms the structure of the plant cuticle. This chain is Cutinase, found in Hypocrea jecorina (strain QM6a) (Trichoderma reesei).